Reading from the N-terminus, the 156-residue chain is Small ribosomal subunit protein uS7 (156 aa).

The protein belongs to the universal ribosomal protein uS7 family. Part of the 30S ribosomal subunit. Contacts proteins S9 and S11.

In terms of biological role, one of the primary rRNA binding proteins, it binds directly to 16S rRNA where it nucleates assembly of the head domain of the 30S subunit. Is located at the subunit interface close to the decoding center, probably blocks exit of the E-site tRNA. The chain is Small ribosomal subunit protein uS7 from Geotalea uraniireducens (strain Rf4) (Geobacter uraniireducens).